A 36-amino-acid chain; its full sequence is Photosystem I reaction center subunit VIII (36 aa).

A helical transmembrane segment spans residues 9-29; it reads ILVPLVGLIFPALSMALLFIY.

The protein belongs to the PsaI family.

The protein localises to the plastid. It is found in the chloroplast thylakoid membrane. Its function is as follows. May help in the organization of the PsaL subunit. This Pyropia yezoensis (Susabi-nori) protein is Photosystem I reaction center subunit VIII.